A 73-amino-acid polypeptide reads, in one-letter code: MSNKKKTFEENLQDLEEIVNQLETGEIPLEEAITQFQKGMALSKDLQKTLESAEKTLVKVMQADGSEAEMDEL.

The protein belongs to the XseB family. As to quaternary structure, heterooligomer composed of large and small subunits.

Its subcellular location is the cytoplasm. The enzyme catalyses Exonucleolytic cleavage in either 5'- to 3'- or 3'- to 5'-direction to yield nucleoside 5'-phosphates.. Bidirectionally degrades single-stranded DNA into large acid-insoluble oligonucleotides, which are then degraded further into small acid-soluble oligonucleotides. The sequence is that of Exodeoxyribonuclease 7 small subunit from Streptococcus mutans serotype c (strain ATCC 700610 / UA159).